The chain runs to 520 residues: Ribonuclease Y (520 aa).

Residues 3–23 form a helical membrane-spanning segment; that stretch reads IELAIIFIVLAAGAGFLIGNL. The region spanning 210-273 is the KH domain; it reads TVSVVALPSD…EVAKIALEKL (64 aa). An HD domain is found at 336 to 429; sequence VYQHSLEVAF…VQAADALSGA (94 aa).

Belongs to the RNase Y family.

It localises to the cell membrane. In terms of biological role, endoribonuclease that initiates mRNA decay. The sequence is that of Ribonuclease Y from Geobacter sulfurreducens (strain ATCC 51573 / DSM 12127 / PCA).